We begin with the raw amino-acid sequence, 298 residues long: Inosose dehydratase (298 aa).

This sequence belongs to the IolE/MocC family. Glutathione is required as a cofactor. It depends on Co(2+) as a cofactor. The cofactor is Mn(2+).

The catalysed reaction is scyllo-inosose = 3D-3,5/4-trihydroxycyclohexane-1,2-dione + H2O. Catalyzes the dehydration of inosose (2-keto-myo-inositol, 2KMI or 2,4,6/3,5-pentahydroxycyclohexanone) to 3D-(3,5/4)-trihydroxycyclohexane-1,2-dione (D-2,3-diketo-4-deoxy-epi-inositol). This is Inosose dehydratase from Serratia proteamaculans (strain 568).